A 428-amino-acid polypeptide reads, in one-letter code: Trigger factor (428 aa).

The PPIase FKBP-type domain occupies Gly163–Pro248.

This sequence belongs to the FKBP-type PPIase family. Tig subfamily.

It is found in the cytoplasm. The enzyme catalyses [protein]-peptidylproline (omega=180) = [protein]-peptidylproline (omega=0). In terms of biological role, involved in protein export. Acts as a chaperone by maintaining the newly synthesized protein in an open conformation. Functions as a peptidyl-prolyl cis-trans isomerase. This is Trigger factor from Geobacillus sp. (strain WCH70).